We begin with the raw amino-acid sequence, 304 residues long: UDP-3-O-acyl-N-acetylglucosamine deacetylase (304 aa).

Zn(2+) is bound by residues histidine 78, histidine 237, and aspartate 241. The Proton donor role is filled by histidine 264.

The protein belongs to the LpxC family. Zn(2+) serves as cofactor.

It catalyses the reaction a UDP-3-O-[(3R)-3-hydroxyacyl]-N-acetyl-alpha-D-glucosamine + H2O = a UDP-3-O-[(3R)-3-hydroxyacyl]-alpha-D-glucosamine + acetate. It participates in glycolipid biosynthesis; lipid IV(A) biosynthesis; lipid IV(A) from (3R)-3-hydroxytetradecanoyl-[acyl-carrier-protein] and UDP-N-acetyl-alpha-D-glucosamine: step 2/6. In terms of biological role, catalyzes the hydrolysis of UDP-3-O-myristoyl-N-acetylglucosamine to form UDP-3-O-myristoylglucosamine and acetate, the committed step in lipid A biosynthesis. This chain is UDP-3-O-acyl-N-acetylglucosamine deacetylase, found in Xylella fastidiosa (strain Temecula1 / ATCC 700964).